The following is a 183-amino-acid chain: ESX-1 secretion-associated protein EspH (183 aa).

Over residues 1–16 (MVDPPGNDDDHGDLDA) the composition is skewed to acidic residues. The tract at residues 1–32 (MVDPPGNDDDHGDLDALDFSAAHTNEASPLDA) is disordered.

This chain is ESX-1 secretion-associated protein EspH, found in Mycobacterium tuberculosis (strain ATCC 25618 / H37Rv).